A 2271-amino-acid polypeptide reads, in one-letter code: Protein Ycf2 (2271 aa).

1628-1635 serves as a coordination point for ATP; the sequence is GSIGTGRS.

This sequence belongs to the Ycf2 family.

Its subcellular location is the plastid. The protein localises to the chloroplast stroma. Functionally, probable ATPase of unknown function. Its presence in a non-photosynthetic plant (Epifagus virginiana) and experiments in tobacco indicate that it has an essential function which is probably not related to photosynthesis. In Illicium oligandrum (Star anise), this protein is Protein Ycf2.